Reading from the N-terminus, the 247-residue chain is Coproheme decarboxylase (247 aa).

Fe-coproporphyrin III is bound by residues Arg-129, 143–147 (YPMDK), His-170, Gln-183, and Ser-221. Tyr-143 is an active-site residue.

This sequence belongs to the ChdC family. Type 1 subfamily. Requires Fe-coproporphyrin III as cofactor.

The catalysed reaction is Fe-coproporphyrin III + 2 H2O2 + 2 H(+) = heme b + 2 CO2 + 4 H2O. It carries out the reaction Fe-coproporphyrin III + H2O2 + H(+) = harderoheme III + CO2 + 2 H2O. It catalyses the reaction harderoheme III + H2O2 + H(+) = heme b + CO2 + 2 H2O. The protein operates within porphyrin-containing compound metabolism; protoheme biosynthesis. Involved in coproporphyrin-dependent heme b biosynthesis. Catalyzes the decarboxylation of Fe-coproporphyrin III (coproheme) to heme b (protoheme IX), the last step of the pathway. The reaction occurs in a stepwise manner with a three-propionate intermediate. This Bacillus anthracis protein is Coproheme decarboxylase.